The primary structure comprises 236 residues: Small ribosomal subunit protein eS6 (236 aa).

The protein belongs to the eukaryotic ribosomal protein eS6 family. As to quaternary structure, component of the small ribosomal subunit. Part of the small subunit (SSU) processome, composed of more than 70 proteins and the RNA chaperone small nucleolar RNA (snoRNA) U3. Post-translationally, ribosomal protein S6 is the major substrate of protein kinases in eukaryote ribosomes.

Its subcellular location is the cytoplasm. It is found in the nucleus. The protein localises to the nucleolus. Functionally, component of the 40S small ribosomal subunit. Plays an important role in controlling cell growth and proliferation through the selective translation of particular classes of mRNA. Part of the small subunit (SSU) processome, first precursor of the small eukaryotic ribosomal subunit. During the assembly of the SSU processome in the nucleolus, many ribosome biogenesis factors, an RNA chaperone and ribosomal proteins associate with the nascent pre-rRNA and work in concert to generate RNA folding, modifications, rearrangements and cleavage as well as targeted degradation of pre-ribosomal RNA by the RNA exosome. The protein is Small ribosomal subunit protein eS6 (rps6) of Dictyostelium discoideum (Social amoeba).